The chain runs to 146 residues: Large ribosomal subunit protein uL15 (146 aa).

A compositionally biased stretch (basic and acidic residues) spans 1–13 (MKLHELKPSEGSR). The disordered stretch occupies residues 1–54 (MKLHELKPSEGSRKVRNRVGRGIGSGNGKTAGKGHKGQNARSGGGVRPGFEGGQ). 2 stretches are compositionally biased toward gly residues: residues 21-31 (RGIGSGNGKTA) and 42-52 (SGGGVRPGFEG).

The protein belongs to the universal ribosomal protein uL15 family. Part of the 50S ribosomal subunit.

In terms of biological role, binds to the 23S rRNA. The sequence is that of Large ribosomal subunit protein uL15 from Bacillus velezensis (strain DSM 23117 / BGSC 10A6 / LMG 26770 / FZB42) (Bacillus amyloliquefaciens subsp. plantarum).